Reading from the N-terminus, the 432-residue chain is MNFDVAIIGGGLAGLTCGIALQQRGKRCVIINNGQAAIDFASGSLDLLSRMPSTTYGENRAVENLKENITALRNELPAHPYSLLGAEKVLAKAQDFERLANELHLDLIGSTEKNHWRVTGLGSLRGAWLSPNSVPTVQGNELFPHKRIAVLGIEGYHDFQPQLLAANLVLNPQFEYCEVTSGFLNIPQLDELRKNAREFRSVNISQLLEHKLAFKDLVKEIIESSQGAEAVFLPACFGLENQEFMTALRDATKLALFELPTLPPSLLGMRQRIQLRHKFESLGGLMINGDSALNATFEGNKVRCINTRLLEDEEITADNFVLASGSFFSKGLISEFDKIYEPVFESDIIGVEGFNQKDRFTWTVHRFAHPQPYQSAGVAINAQCQVKKCGQFLTNLYAVGNVIGGFNALELGCGSGVAVVTALAVADEILAK.

This sequence belongs to the anaerobic G-3-P dehydrogenase subunit B family. In terms of assembly, composed of a catalytic GlpA/B dimer and of membrane bound GlpC. The cofactor is FMN.

The catalysed reaction is a quinone + sn-glycerol 3-phosphate = dihydroxyacetone phosphate + a quinol. It functions in the pathway polyol metabolism; glycerol degradation via glycerol kinase pathway; glycerone phosphate from sn-glycerol 3-phosphate (anaerobic route): step 1/1. In terms of biological role, conversion of glycerol 3-phosphate to dihydroxyacetone. Uses fumarate or nitrate as electron acceptor. The sequence is that of Anaerobic glycerol-3-phosphate dehydrogenase subunit B from Haemophilus influenzae (strain PittEE).